Reading from the N-terminus, the 358-residue chain is MEPNGTVHSCCLDSMALKVTISVVLTTLILITIAGNVVVCLAVSLNRRLRSLTNCFIVSLAATDLLLGLLVLPFSAIYQLSFTWSFGHVFCNIYTSLDVMLCTASILNLFMISLDRYCAVTDPLRYPVLVTPVRVAISLVFIWVISITLSFLSIHLGWNSRNGTRGGNDTFKCKVQVNEVYGLVDGLVTFYLPLLIMCVTYYRIFKIAREQAKRINHISSWKAATIREHKATVTLAAVMGAFIICWFPYFTAFVYRGLRGDDAINEAVEGIVLWLGYANSALNPILYAALNRDFRTAYQQLFHCKFASHNSHKTSLRLNNSLLPRSQSREGRWQEEKPLKLQVWSGTELTHPQGNPIR.

The Extracellular portion of the chain corresponds to 1 to 22; the sequence is MEPNGTVHSCCLDSMALKVTIS. The N-linked (GlcNAc...) asparagine glycan is linked to Asn4. The helical transmembrane segment at 23 to 44 threads the bilayer; that stretch reads VVLTTLILITIAGNVVVCLAVS. Residues 45-57 lie on the Cytoplasmic side of the membrane; it reads LNRRLRSLTNCFI. Residues 58–81 form a helical membrane-spanning segment; sequence VSLAATDLLLGLLVLPFSAIYQLS. Residues 82–92 lie on the Extracellular side of the membrane; that stretch reads FTWSFGHVFCN. Cys91 and Cys173 form a disulfide bridge. Residues 93–114 form a helical membrane-spanning segment; it reads IYTSLDVMLCTASILNLFMISL. Over 115–134 the chain is Cytoplasmic; the sequence is DRYCAVTDPLRYPVLVTPVR. A helical transmembrane segment spans residues 135–159; that stretch reads VAISLVFIWVISITLSFLSIHLGWN. Residues 160–179 are Extracellular-facing; that stretch reads SRNGTRGGNDTFKCKVQVNE. The helical transmembrane segment at 180–203 threads the bilayer; that stretch reads VYGLVDGLVTFYLPLLIMCVTYYR. Residues 204 to 233 lie on the Cytoplasmic side of the membrane; that stretch reads IFKIAREQAKRINHISSWKAATIREHKATV. The chain crosses the membrane as a helical span at residues 234-257; that stretch reads TLAAVMGAFIICWFPYFTAFVYRG. The Extracellular segment spans residues 258–266; sequence LRGDDAINE. The chain crosses the membrane as a helical span at residues 267–288; it reads AVEGIVLWLGYANSALNPILYA. At 289–358 the chain is on the cytoplasmic side; it reads ALNRDFRTAY…LTHPQGNPIR (70 aa). Cys304 carries the S-palmitoyl cysteine lipid modification.

This sequence belongs to the G-protein coupled receptor 1 family.

The protein localises to the cell membrane. Its function is as follows. The H2 subclass of histamine receptors mediates gastric acid secretion. The activity of this receptor is mediated by G proteins which activate adenylyl cyclase. In Rattus norvegicus (Rat), this protein is Histamine H2 receptor (Hrh2).